The following is a 503-amino-acid chain: AMP phosphorylase (503 aa).

AMP contacts are provided by residues Gly168, 194–199 (SRAITS), and Thr203. The active-site Proton donor is the Asp256. AMP contacts are provided by Ser264 and Lys288.

This sequence belongs to the thymidine/pyrimidine-nucleoside phosphorylase family. Type 2 subfamily. Forms an exceptionally large macromolecular structure (&gt;40-mers) in solution.

It carries out the reaction AMP + phosphate = alpha-D-ribose 1,5-bisphosphate + adenine. The catalysed reaction is CMP + phosphate = cytosine + alpha-D-ribose 1,5-bisphosphate. The enzyme catalyses UMP + phosphate = alpha-D-ribose 1,5-bisphosphate + uracil. With respect to regulation, AMP phosphorolysis is allosterically regulated by the substrate AMP. Catalyzes the conversion of AMP and phosphate to adenine and ribose 1,5-bisphosphate (R15P). Exhibits phosphorylase activity toward CMP, dCMP and UMP in addition to AMP. Functions in an archaeal AMP degradation pathway, together with R15P isomerase and RubisCO. The sequence is that of AMP phosphorylase from Thermococcus kodakarensis (strain ATCC BAA-918 / JCM 12380 / KOD1) (Pyrococcus kodakaraensis (strain KOD1)).